The primary structure comprises 294 residues: ATP synthase gamma chain (294 aa).

This sequence belongs to the ATPase gamma chain family. F-type ATPases have 2 components, CF(1) - the catalytic core - and CF(0) - the membrane proton channel. CF(1) has five subunits: alpha(3), beta(3), gamma(1), delta(1), epsilon(1). CF(0) has three main subunits: a, b and c.

Its subcellular location is the cell inner membrane. Produces ATP from ADP in the presence of a proton gradient across the membrane. The gamma chain is believed to be important in regulating ATPase activity and the flow of protons through the CF(0) complex. This is ATP synthase gamma chain from Campylobacter jejuni subsp. jejuni serotype O:2 (strain ATCC 700819 / NCTC 11168).